The sequence spans 276 residues: MTDTYLHETLVFDNKLSYIDNQRDTDGPAILLLPGWCHDHRVYKYLIQELDADFRVIVPNWRGHGLSPCEVPDFGYQEQVKDALEILDQLGVETFLPVSHSHGGWVLVELLEQAGPERAPRGIIMDWLMWAPKPDFAKSLTLLKDPERWREGTHGLFDVWLDGHDEKRVRHHLLEEMADYGYDCWGRSGRVIEDAYGRNGSPMQMMANLTKTRPIRHIFSQPTEPEYEKINSDFAEQHPWFSYAKLGGPTHFPAIDVPDRAAVHIREFATAIRQGQ.

The AB hydrolase-1 domain maps to Pro-28–Arg-150. Residues Trp-36 to His-38, His-100 to Ser-101, and Trp-160 contribute to the substrate site. Catalysis depends on His-251, which acts as the Proton donor/acceptor.

The protein belongs to the AB hydrolase superfamily. None. Contrary to most other dioxygenases, this enzyme does not require a cofactor for catalysis. serves as cofactor.

It catalyses the reaction 3-hydroxy-2-methyl-1H-quinolin-4-one + O2 = N-acetylanthranilate + CO + H(+). Its function is as follows. Ring-cleaving dioxygenase involved in quinaldine degradation and utilization. The polypeptide is 1H-3-hydroxy-4-oxoquinaldine 2,4-dioxygenase (hod) (Paenarthrobacter nitroguajacolicus (Arthrobacter nitroguajacolicus)).